The primary structure comprises 470 residues: Uronate isomerase (470 aa).

It belongs to the metallo-dependent hydrolases superfamily. Uronate isomerase family.

It catalyses the reaction D-glucuronate = D-fructuronate. The catalysed reaction is aldehydo-D-galacturonate = keto-D-tagaturonate. It participates in carbohydrate metabolism; pentose and glucuronate interconversion. The protein is Uronate isomerase of Salmonella paratyphi A (strain ATCC 9150 / SARB42).